A 346-amino-acid chain; its full sequence is Putative D-threonate 4-phosphate dehydrogenase (346 aa).

2 residues coordinate substrate: His141 and Thr142. A divalent metal cation-binding residues include His171, His215, and His270. Residues Lys278 and Arg296 each coordinate substrate.

It belongs to the PdxA family. PdxA2 subfamily. Homodimer. A divalent metal cation serves as cofactor.

It carries out the reaction 4-O-phospho-D-threonate + NAD(+) = dihydroxyacetone phosphate + CO2 + NADH. In terms of biological role, catalyzes the NAD-dependent oxidation and subsequent decarboxylation of D-threonate 4-phosphate to produce dihydroxyacetone phosphate (DHAP). This chain is Putative D-threonate 4-phosphate dehydrogenase, found in Cutibacterium acnes (strain DSM 16379 / KPA171202) (Propionibacterium acnes).